The chain runs to 140 residues: Large ribosomal subunit protein uL11 (140 aa).

It belongs to the universal ribosomal protein uL11 family. Part of the ribosomal stalk of the 50S ribosomal subunit. Interacts with L10 and the large rRNA to form the base of the stalk. L10 forms an elongated spine to which L12 dimers bind in a sequential fashion forming a multimeric L10(L12)X complex. One or more lysine residues are methylated.

Functionally, forms part of the ribosomal stalk which helps the ribosome interact with GTP-bound translation factors. In Dehalococcoides mccartyi (strain CBDB1), this protein is Large ribosomal subunit protein uL11.